Consider the following 585-residue polypeptide: MLGRALINKYGFLIHPRRFVHLNDKSLDGTFILPSKKNHMYDVPTNDPSGILNASDIDRINNLPFFDNTSPTKETNTKEGALLSEKLASVKELFGEDPENPSFINYRFPRGLENPYFDIQVNQLKKKRLSVTQLCTTQNWCELRNFYDFYSQNLSNQLLNLKFQVQKGKKIHKSLEDETHPELNQYKSFTHNFLALTKLSMDIDNDMDALLDNWFNSINRLVSLFTKGDGHAREIVCHGFINLEDGKLVEHLLNSDSKTKENVIISGVIDHLTLRNRHNHQVQKGAAHLDTEYQSWGNILTNLLSNLKELKSNNEIVISDIKTRSVPKIPSIESVIESSKLQTMYYKFFFSHLSQDMTQTYHSFLINAQRRGLDVDAPINPTKILTFILTNPLFANDVKNLLYGLPINHSAFDNDAKGSNTFDMTAFNDLLDRGPTSFNVPIEQDEDSSESTKCVSLRDYGHFYTKWKTPLTLKYFAARLSQIYFIVGNLVSNDLMIEYYYHNDNFHNIIFPYDPLKLGTHAHDSAMVWFGGRDMHPIEPTQKNFNTYCKFCDYRHVCSWKNKNELKLIDLGKELKKIILESSMK.

A mitochondrion-targeting transit peptide spans 1–26 (MLGRALINKYGFLIHPRRFVHLNDKS). C141 contributes to the [4Fe-4S] cluster binding site. Positions 270 and 320 each coordinate Mg(2+). The [4Fe-4S] cluster site is built by C549, C552, and C558.

The protein belongs to the EXO5 family. In terms of assembly, monomer. Mg(2+) is required as a cofactor. Requires [4Fe-4S] cluster as cofactor.

The protein localises to the mitochondrion. Functionally, single strand DNA specific 5' exonuclease involved in mitochondrial DNA replication and recombination. Releases dinucleotides as main products of catalysis. Has the capacity to slide across 5'double-stranded DNA or 5'RNA sequences and resumes cutting two nucleotides downstream of the double-stranded-to-single-stranded junction or RNA-to-DNA junction, respectively. The protein is Exonuclease V, mitochondrial (EXO5) of Saccharomyces cerevisiae (strain ATCC 204508 / S288c) (Baker's yeast).